The chain runs to 480 residues: Protein nucleotidyltransferase YdiU (480 aa).

ATP is bound by residues Gly86, Gly88, Arg89, Lys109, Asp121, Gly122, Arg172, and Arg179. Asp248 (proton acceptor) is an active-site residue. The Mg(2+) site is built by Asn249 and Asp258. Asp258 is an ATP binding site.

The protein belongs to the SELO family. Requires Mg(2+) as cofactor. Mn(2+) is required as a cofactor.

The catalysed reaction is L-seryl-[protein] + ATP = 3-O-(5'-adenylyl)-L-seryl-[protein] + diphosphate. It carries out the reaction L-threonyl-[protein] + ATP = 3-O-(5'-adenylyl)-L-threonyl-[protein] + diphosphate. The enzyme catalyses L-tyrosyl-[protein] + ATP = O-(5'-adenylyl)-L-tyrosyl-[protein] + diphosphate. It catalyses the reaction L-histidyl-[protein] + UTP = N(tele)-(5'-uridylyl)-L-histidyl-[protein] + diphosphate. The catalysed reaction is L-seryl-[protein] + UTP = O-(5'-uridylyl)-L-seryl-[protein] + diphosphate. It carries out the reaction L-tyrosyl-[protein] + UTP = O-(5'-uridylyl)-L-tyrosyl-[protein] + diphosphate. In terms of biological role, nucleotidyltransferase involved in the post-translational modification of proteins. It can catalyze the addition of adenosine monophosphate (AMP) or uridine monophosphate (UMP) to a protein, resulting in modifications known as AMPylation and UMPylation. The protein is Protein nucleotidyltransferase YdiU of Enterobacter sp. (strain 638).